Here is a 154-residue protein sequence, read N- to C-terminus: MRIMGLDLGDKKIGVALSDPMGWTAQGLDVIAVKGPPEASVERISELVRQYGVGKIVVGLPRNMNGSFGPRAERARAFAGCLAGALNLPVELWDERMTTLEAEKLLIEADLSRARRRQVIDKMAAVLILQSFLDSQGRPRREAGGKNPGGPEEP.

Belongs to the YqgF nuclease family.

Its subcellular location is the cytoplasm. Could be a nuclease involved in processing of the 5'-end of pre-16S rRNA. The sequence is that of Putative pre-16S rRNA nuclease from Pelotomaculum thermopropionicum (strain DSM 13744 / JCM 10971 / SI).